A 287-amino-acid chain; its full sequence is MVINGIAYKALVRFSVIDSTDLVKTATKKHNLSPITSVALGRLLTGIALMVPWLSKNDTLTYIIEGSNKIKYIAAQSKNNGNVRGYILPKIVDTITNEKGKFDLKSAIGNGTLKVVRDLGLKTPYVTPIKLISGEIAEDLTYYFTISEQIPSAIALGVLVDKNGIKRAGGIIIQILDQSLPKKDITEIEKKFKEITPITNFLEKHTPIDALKHIFGKKIEKTETHEINFRCSCSHQKALESLKLLKVDELKEIIIKNEIVEVSCKWCSTTYKIKPEEVKKILEEKNK.

Disulfide bonds link C231/C233 and C264/C267.

It belongs to the HSP33 family. Under oxidizing conditions two disulfide bonds are formed involving the reactive cysteines. Under reducing conditions zinc is bound to the reactive cysteines and the protein is inactive.

It is found in the cytoplasm. Redox regulated molecular chaperone. Protects both thermally unfolding and oxidatively damaged proteins from irreversible aggregation. Plays an important role in the bacterial defense system toward oxidative stress. In Thermosipho melanesiensis (strain DSM 12029 / CIP 104789 / BI429), this protein is 33 kDa chaperonin.